The chain runs to 114 residues: MSAFGLLILGLLTAVPPASCRQGLGNLQPWMQGLIAVAVFLVLVAIAFAVNHFWCQEEPEPAHMILTIGNKADGVLVGTDGRYSSVAASFRSSEHENAYENVPEEEGKVRSTPM.

Over 1 to 28 (MSAFGLLILGLLTAVPPASCRQGLGNLQ) the chain is Extracellular. Residues 29–51 (PWMQGLIAVAVFLVLVAIAFAVN) form a helical membrane-spanning segment. Over 52-114 (HFWCQEEPEP…EEGKVRSTPM (63 aa)) the chain is Cytoplasmic. Position 85 is a phosphoserine (S85). Positions 95-114 (HENAYENVPEEEGKVRSTPM) are disordered. Over residues 105-114 (EEGKVRSTPM) the composition is skewed to basic and acidic residues.

Belongs to the PDZK1-interacting protein 1/SMIM24 family. As to quaternary structure, forms a heterodimer (via N-terminal transmembrane helix) with SLC5A2/SGLT2 (via TM13); this interaction enhances SLC5A2 transporter activity. Interacts with PDZK1.

It is found in the apical cell membrane. In terms of biological role, auxiliary protein of electrogenic Na(+)-coupled sugar symporter SLC5A2/SGLT2 and SLC5A1/SGLT1. Essential for the transporter activity of SLC5A2/SGLT2 but not SLC5A1/SGLT1. The protein is PDZK1-interacting protein 1 of Pongo abelii (Sumatran orangutan).